Consider the following 649-residue polypeptide: Serine/threonine kinase-like domain-containing protein STKLD1 (649 aa).

A compositionally biased stretch (basic and acidic residues) spans 1–13 (MLGPESDGRRPTQ). Residues 1 to 23 (MLGPESDGRRPTQGERGPGYPGE) form a disordered region. The Protein kinase domain maps to 28-379 (YQVLYQLNPG…CNQAITSAVL (352 aa)). Residues 34–42 (LNPGALGVN) and Lys-57 each bind ATP. A disordered region spans residues 621-640 (FSKPGLPPGGSPQPGCTASG).

It belongs to the protein kinase superfamily. Ser/Thr protein kinase family. STKL subfamily.

This chain is Serine/threonine kinase-like domain-containing protein STKLD1 (STKLD1), found in Macaca fascicularis (Crab-eating macaque).